The sequence spans 261 residues: Receptor expression-enhancing protein 4 (261 aa).

Helical transmembrane passes span 1 to 21 and 35 to 55; these read MVSWIISRAVVLVFGLLYPAY and YVRWMMYWIVFALFMTVETFT. The segment at 167 to 261 is disordered; it reads YTDALYPDEP…KKPAQSEPEN (95 aa). The span at 221 to 230 shows a compositional bias: polar residues; the sequence is KSLQRSQSLR.

It belongs to the DP1 family. In terms of assembly, interacts with microtubules. As to expression, during gastrulation, expressed on the dorsal side of the embryo and then in the neural plate and neural tube. At tailbud stages, expressed in the somites, neural tube and otic vesicle.

It localises to the endoplasmic reticulum membrane. In terms of biological role, microtubule-binding protein required to ensure proper cell division and nuclear envelope reassembly by sequestering the endoplasmic reticulum away from chromosomes during mitosis. Probably acts by clearing the endoplasmic reticulum membrane from metaphase chromosomes. May play a role in the maintenance of both the nervous system and the musculature. The protein is Receptor expression-enhancing protein 4 (reep4) of Xenopus laevis (African clawed frog).